A 301-amino-acid polypeptide reads, in one-letter code: tRNA-cytidine(32) 2-sulfurtransferase (301 aa).

The PP-loop motif motif lies at 55-60; the sequence is SGGKDS. Positions 130, 133, and 221 each coordinate [4Fe-4S] cluster.

The protein belongs to the TtcA family. In terms of assembly, homodimer. It depends on Mg(2+) as a cofactor. The cofactor is [4Fe-4S] cluster.

The protein resides in the cytoplasm. The catalysed reaction is cytidine(32) in tRNA + S-sulfanyl-L-cysteinyl-[cysteine desulfurase] + AH2 + ATP = 2-thiocytidine(32) in tRNA + L-cysteinyl-[cysteine desulfurase] + A + AMP + diphosphate + H(+). It functions in the pathway tRNA modification. Catalyzes the ATP-dependent 2-thiolation of cytidine in position 32 of tRNA, to form 2-thiocytidine (s(2)C32). The sulfur atoms are provided by the cysteine/cysteine desulfurase (IscS) system. The polypeptide is tRNA-cytidine(32) 2-sulfurtransferase (Acinetobacter baumannii (strain SDF)).